The following is a 368-amino-acid chain: 3-isopropylmalate dehydrogenase (368 aa).

Residue 77-88 participates in NAD(+) binding; the sequence is GPKWGTGAVRPE. The substrate site is built by arginine 95, arginine 105, arginine 134, and aspartate 226. Residues aspartate 226, aspartate 251, and aspartate 255 each coordinate Mg(2+). 290–301 contributes to the NAD(+) binding site; that stretch reads GSAPDLPANKVN.

It belongs to the isocitrate and isopropylmalate dehydrogenases family. In terms of assembly, homodimer. Mg(2+) serves as cofactor. Mn(2+) is required as a cofactor.

Its subcellular location is the cytoplasm. It carries out the reaction (2R,3S)-3-isopropylmalate + NAD(+) = 4-methyl-2-oxopentanoate + CO2 + NADH. Its pathway is amino-acid biosynthesis; L-leucine biosynthesis; L-leucine from 3-methyl-2-oxobutanoate: step 3/4. Its function is as follows. Catalyzes the oxidation of 3-carboxy-2-hydroxy-4-methylpentanoate (3-isopropylmalate) to 3-carboxy-4-methyl-2-oxopentanoate. The product decarboxylates to 4-methyl-2 oxopentanoate. The chain is 3-isopropylmalate dehydrogenase (LEU2) from Kodamaea ohmeri (Yeast).